Reading from the N-terminus, the 323-residue chain is Movement protein (323 aa).

Residues 292–322 (SLLENKDENLLRSMSTKIDTLGKKLSLIYDN) are a coiled coil.

The protein belongs to the caulimoviridae movement protein family. As to quaternary structure, homotrimer, through the coiled-coil domain. Interacts with VAP.

It localises to the host cell junction. It is found in the host plasmodesma. Functionally, transports viral genome to neighboring plant cells directly through plasmosdesmata, without any budding. The movement protein allows efficient cell to cell propagation, by bypassing the host cell wall barrier. Acts by forming tubules structures that increase the size exclusion limit (SEL) of plasmodesmata, thereby allowing viral ribonucleocapsids to spread directly to neighboring cells. The sequence is that of Movement protein from Figwort mosaic virus (strain DxS) (FMV).